The following is a 473-amino-acid chain: 3-isopropylmalate dehydratase large subunit (473 aa).

[4Fe-4S] cluster is bound by residues cysteine 349, cysteine 409, and cysteine 412.

Belongs to the aconitase/IPM isomerase family. LeuC type 1 subfamily. In terms of assembly, heterodimer of LeuC and LeuD. Requires [4Fe-4S] cluster as cofactor.

The enzyme catalyses (2R,3S)-3-isopropylmalate = (2S)-2-isopropylmalate. It participates in amino-acid biosynthesis; L-leucine biosynthesis; L-leucine from 3-methyl-2-oxobutanoate: step 2/4. In terms of biological role, catalyzes the isomerization between 2-isopropylmalate and 3-isopropylmalate, via the formation of 2-isopropylmaleate. The sequence is that of 3-isopropylmalate dehydratase large subunit from Gloeobacter violaceus (strain ATCC 29082 / PCC 7421).